The primary structure comprises 264 residues: Pyridoxine 5'-phosphate synthase (264 aa).

The span at Met-1–Lys-21 shows a compositional bias: polar residues. Residues Met-1–Lys-22 are disordered. Asn-28 provides a ligand contact to 3-amino-2-oxopropyl phosphate. Asp-30–His-31 contacts 1-deoxy-D-xylulose 5-phosphate. Arg-39 is a binding site for 3-amino-2-oxopropyl phosphate. The Proton acceptor role is filled by His-64. Residues Arg-66 and His-71 each contribute to the 1-deoxy-D-xylulose 5-phosphate site. Glu-91 (proton acceptor) is an active-site residue. Position 121 (Thr-121) interacts with 1-deoxy-D-xylulose 5-phosphate. Residue His-217 is the Proton donor of the active site. Residues Gly-218 and Gly-239 to His-240 each bind 3-amino-2-oxopropyl phosphate.

The protein belongs to the PNP synthase family. Homooctamer; tetramer of dimers.

The protein resides in the cytoplasm. The catalysed reaction is 3-amino-2-oxopropyl phosphate + 1-deoxy-D-xylulose 5-phosphate = pyridoxine 5'-phosphate + phosphate + 2 H2O + H(+). Its pathway is cofactor biosynthesis; pyridoxine 5'-phosphate biosynthesis; pyridoxine 5'-phosphate from D-erythrose 4-phosphate: step 5/5. Catalyzes the complicated ring closure reaction between the two acyclic compounds 1-deoxy-D-xylulose-5-phosphate (DXP) and 3-amino-2-oxopropyl phosphate (1-amino-acetone-3-phosphate or AAP) to form pyridoxine 5'-phosphate (PNP) and inorganic phosphate. This is Pyridoxine 5'-phosphate synthase from Psychrobacter cryohalolentis (strain ATCC BAA-1226 / DSM 17306 / VKM B-2378 / K5).